A 116-amino-acid chain; its full sequence is Ly-6/neurotoxin-like protein 1 (116 aa).

An N-terminal signal peptide occupies residues 1–20 (MTPLLTLILVVLMGLPLAQA). Residues 21–105 (LDCHVCAYNG…LATPATLALA (85 aa)) form the UPAR/Ly6 domain. 5 cysteine pairs are disulfide-bonded: C23-C46, C26-C33, C39-C64, C68-C85, and C86-C91. The GPI-anchor amidated asparagine moiety is linked to residue N92. Positions 93 to 116 (GAGLATPATLALAPILLATLWGLL) are cleaved as a propeptide — removed in mature form.

As to quaternary structure, interacts with nAChRs containing alpha-4:beta-2 (CHRNA4:CHRNB2) and alpha-7 (CHRNA7) subunits. Interacts with CHRNA4 probably in the endoplasmic reticulum prior to nAChR pentameric assembly. Interacts with KCNA2/Potassium voltage-gated channel subfamily A member 2.

It is found in the cell membrane. Its subcellular location is the cell projection. It localises to the dendrite. The protein resides in the endoplasmic reticulum. In terms of biological role, acts in different tissues through interaction to nicotinic acetylcholine receptors (nAChRs). The proposed role as modulator of nAChR activity seems to be dependent on the nAChR subtype and stoichiometry, and to involve an effect on nAChR trafficking and its cell surface expression, and on single channel properties of the nAChR inserted in the plasma membrane. Modulates functional properties of nicotinic acetylcholine receptors (nAChRs) to prevent excessive excitation, and hence neurodegeneration. Enhances desensitization by increasing both the rate and extent of desensitization of alpha-4:beta-2-containing nAChRs and slowing recovery from desensitization. Promotes large amplitude ACh-evoked currents through alpha-4:beta-2 nAChRs. Is involved in regulation of the nAChR pentameric assembly in the endoplasmic reticulum. Shifts stoichiometry from high sensitivity alpha-4(2):beta-2(3) to low sensitivity alpha-4(3):beta-2(2) nAChR. In vitro modulates alpha-3:beta-4-containing nAChRs. Reduces cell surface expression of (alpha-3:beta-4)(2):beta-4 and (alpha-3:beta-4)(2):alpha-5 nAChRs suggesting an interaction with nAChR alpha-3(-):(+)beta-4 subunit interfaces and an allosteric mode. Corresponding single channel effects characterized by decreased unitary conductance, altered burst proportions and enhanced desensitization/inactivation seem to depend on nAChR alpha:alpha subunit interfaces and are greater in (alpha-3:beta-2)(2):alpha-3 when compared to (alpha-3:beta-2)(2):alpha-5 nAChRs. Prevents plasticity in the primary visual cortex late in life. This chain is Ly-6/neurotoxin-like protein 1, found in Pan troglodytes (Chimpanzee).